A 365-amino-acid polypeptide reads, in one-letter code: GDSL lipase (365 aa).

Residues 1–27 form the signal peptide; it reads MAVASRKLGALVLVAVLCLSLPTGCLS. Serine 40 acts as the Nucleophile in catalysis. N-linked (GlcNAc...) asparagine glycosylation is found at asparagine 189 and asparagine 310. Active-site charge relay system residues include aspartate 318 and histidine 321.

It belongs to the 'GDSL' lipolytic enzyme family. As to expression, restricted to the pericarp during achene maturation. Expressed in the leaves of mature plants and seedlings, as well as in buds and flowers. Present in disk florets.

The protein localises to the secreted. Its subcellular location is the extracellular space. It catalyses the reaction (Z,S)-pyrethrolone + (1R,3R)-chrysanthemoyl-CoA = pyrethrin I + CoA. The enzyme catalyses (Z,S)-pyrethrolone + (1R,3R)-pyrethroyl-CoA = pyrethrin II + CoA. The catalysed reaction is (Z,S)-jasmololone + (1R,3R)-chrysanthemoyl-CoA = jasmolin I + CoA. It carries out the reaction (Z,S)-cinerolone + (1R,3R)-chrysanthemoyl-CoA = cinerin I + CoA. It catalyses the reaction (Z,S)-jasmololone + (1R,3R)-pyrethroyl-CoA = jasmolin II + CoA. The enzyme catalyses (Z,S)-cinerolone + (1R,3R)-pyrethroyl-CoA = cinerin II + CoA. It participates in isoprenoid biosynthesis. Component of the monoterpenoid pyrethrins biosynthesis; pyrethrins are widely used plant-derived pesticide. Acyltransferase that catalyzes the esterification of terpene acids and lipid alcohol substrates into pyrethrins; mediates the transfer of a chrysanthemoyl moiety from the coenzyme A (CoA) thio-ester chrysanthemoyl CoA to pyrethrolone, and, to a lower extent, to jasmololone and cinerolone thus producing pyrethrins (e.g. pyrethrin type I). Can also use pyrethroyl CoA as substrate. Also has esterase activity, being able to cleave the ester bond of pyrethrin I, p-nitrophenyl butanoate and p-nitrophenyl octanoate to produce pyrethrolone and p-nitrophenol, respectively. This Tanacetum cinerariifolium (Dalmatian daisy) protein is GDSL lipase.